The following is a 234-amino-acid chain: Demethylmenaquinone methyltransferase (234 aa).

S-adenosyl-L-methionine contacts are provided by residues Thr58, Asp79, and 106-107 (NA).

This sequence belongs to the class I-like SAM-binding methyltransferase superfamily. MenG/UbiE family.

It carries out the reaction a 2-demethylmenaquinol + S-adenosyl-L-methionine = a menaquinol + S-adenosyl-L-homocysteine + H(+). It functions in the pathway quinol/quinone metabolism; menaquinone biosynthesis; menaquinol from 1,4-dihydroxy-2-naphthoate: step 2/2. In terms of biological role, methyltransferase required for the conversion of demethylmenaquinol (DMKH2) to menaquinol (MKH2). The polypeptide is Demethylmenaquinone methyltransferase (Bacillus pumilus (strain SAFR-032)).